We begin with the raw amino-acid sequence, 179 residues long: MARLKEIYRNEIAPKLKNELQLVNVMEVPRITKITLNMGLGEAVGDKKVIENAVADLEKITGQKPVVTYARKSIAGFKIREGWPIGVKVTLRRDRMYEFLDRLLSISLPRVRDFRGLNAKSFDGRGNYSMGVKEQIIFPEIDYDKIDALRGLDITLTTTARTDDEGRALLRAFNFPFRN.

It belongs to the universal ribosomal protein uL5 family. Part of the 50S ribosomal subunit; part of the 5S rRNA/L5/L18/L25 subcomplex. Contacts the 5S rRNA and the P site tRNA. Forms a bridge to the 30S subunit in the 70S ribosome.

Functionally, this is one of the proteins that bind and probably mediate the attachment of the 5S RNA into the large ribosomal subunit, where it forms part of the central protuberance. In the 70S ribosome it contacts protein S13 of the 30S subunit (bridge B1b), connecting the 2 subunits; this bridge is implicated in subunit movement. Contacts the P site tRNA; the 5S rRNA and some of its associated proteins might help stabilize positioning of ribosome-bound tRNAs. The protein is Large ribosomal subunit protein uL5 of Azotobacter vinelandii (strain DJ / ATCC BAA-1303).